We begin with the raw amino-acid sequence, 250 residues long: Small ribosomal subunit protein uS3 (250 aa).

The 69-residue stretch at 39–107 folds into the KH type-2 domain; the sequence is VREFLTKKLK…PAQVSINEID (69 aa). The tract at residues 214–250 is disordered; it reads VMNPAPQEERPAKRGRGRGEGQERRGRRSDRAADKGE. Residues 220-250 show a composition bias toward basic and acidic residues; the sequence is QEERPAKRGRGRGEGQERRGRRSDRAADKGE.

Belongs to the universal ribosomal protein uS3 family. In terms of assembly, part of the 30S ribosomal subunit. Forms a tight complex with proteins S10 and S14.

In terms of biological role, binds the lower part of the 30S subunit head. Binds mRNA in the 70S ribosome, positioning it for translation. This is Small ribosomal subunit protein uS3 from Acinetobacter baylyi (strain ATCC 33305 / BD413 / ADP1).